The chain runs to 387 residues: Probable aminomethyltransferase, mitochondrial (387 aa).

3 residues coordinate substrate: Glu219, Arg248, and Tyr385.

It belongs to the GcvT family. In terms of assembly, the glycine cleavage system is composed of four proteins: P, T, L and H.

The protein localises to the mitochondrion. The catalysed reaction is N(6)-[(R)-S(8)-aminomethyldihydrolipoyl]-L-lysyl-[protein] + (6S)-5,6,7,8-tetrahydrofolate = N(6)-[(R)-dihydrolipoyl]-L-lysyl-[protein] + (6R)-5,10-methylene-5,6,7,8-tetrahydrofolate + NH4(+). In terms of biological role, the glycine cleavage system catalyzes the degradation of glycine. In Schizosaccharomyces pombe (strain 972 / ATCC 24843) (Fission yeast), this protein is Probable aminomethyltransferase, mitochondrial (gcv1).